A 229-amino-acid chain; its full sequence is Bcl-2-like protein 1 (229 aa).

The BH4 motif lies at 4-24 (SNRELVIDFVSYKLSQRGHCW). A BH3 motif is present at residues 82–96 (VRQALRDAGDEFELR). The BH1 signature appears at 125 to 144 (ELFHDGVNWGRIVAFFSFGG). A BH2 motif is present at residues 176-191 (PWIQENGGWERFVDLY). Residues 206-223 (FNKWLLTGATVAGVLLLG) form a helical membrane-spanning segment.

Belongs to the Bcl-2 family. In terms of tissue distribution, highest expression in organs with lymphoid development.

The protein resides in the mitochondrion membrane. Its subcellular location is the nucleus membrane. It is found in the mitochondrion matrix. The protein localises to the cytoplasm. It localises to the cytoskeleton. The protein resides in the microtubule organizing center. Its subcellular location is the centrosome. It is found in the cytosol. The protein localises to the cytoplasmic vesicle. It localises to the secretory vesicle. The protein resides in the synaptic vesicle membrane. Functionally, dominant regulator of apoptotic cell death. The long form displays cell death repressor activity, whereas the short isoform promotes apoptosis. Also acts as a regulator of G2 checkpoint and progression to cytokinesis during mitosis. This chain is Bcl-2-like protein 1 (BCL2L1), found in Gallus gallus (Chicken).